Consider the following 100-residue polypeptide: Ubiquitin-related modifier 1 homolog (100 aa).

Gly-100 carries the post-translational modification 1-thioglycine. Gly-100 is covalently cross-linked (Glycyl lysine isopeptide (Gly-Lys) (interchain with K-? in acceptor proteins)).

Belongs to the URM1 family. Interacts with cer. Post-translationally, C-terminal thiocarboxylation occurs in 2 steps, it is first acyl-adenylated (-COAMP) via the hesA/moeB/thiF part of the MOCS3 homolog, then thiocarboxylated (-COSH) via the rhodanese domain of the MOCS3 homolog.

It localises to the cytoplasm. The protein operates within tRNA modification; 5-methoxycarbonylmethyl-2-thiouridine-tRNA biosynthesis. Its function is as follows. Acts as a sulfur carrier required for 2-thiolation of mcm(5)S(2)U at tRNA wobble positions of cytosolic tRNA(Lys), tRNA(Glu) and tRNA(Gln). Serves as sulfur donor in tRNA 2-thiolation reaction by being thiocarboxylated (-COSH) at its C-terminus by MOCS3. The sulfur is then transferred to tRNA to form 2-thiolation of mcm(5)S(2)U. Also acts as a ubiquitin-like protein (UBL) that is covalently conjugated via an isopeptide bond to lysine residues of target proteins such as Prx2/Jafrac1, Ciao1, Eip71CD and GILT1. The thiocarboxylated form serves as substrate for conjugation and oxidative stress specifically induces the formation of UBL-protein conjugates. This Drosophila willistoni (Fruit fly) protein is Ubiquitin-related modifier 1 homolog.